Reading from the N-terminus, the 257-residue chain is tRNA pseudouridine synthase A (257 aa).

Asp53 acts as the Nucleophile in catalysis. Substrate is bound at residue Tyr111.

Belongs to the tRNA pseudouridine synthase TruA family. Homodimer.

The catalysed reaction is uridine(38/39/40) in tRNA = pseudouridine(38/39/40) in tRNA. Its function is as follows. Formation of pseudouridine at positions 38, 39 and 40 in the anticodon stem and loop of transfer RNAs. This is tRNA pseudouridine synthase A from Xylella fastidiosa (strain M23).